The chain runs to 89 residues: MKEIILWPAYIDLKRTKNEGRKVPKEIAIQNPKLKEIASKIKKMGLEYSVENKKSYPKESWEICGYIKVKVDESTSKLQFLKEICINMK.

This sequence belongs to the SRP19 family. As to quaternary structure, part of the signal recognition particle protein translocation system, which is composed of SRP and FtsY. Archaeal SRP consists of a 7S RNA molecule of 300 nucleotides and two protein subunits: SRP54 and SRP19.

The protein localises to the cytoplasm. Involved in targeting and insertion of nascent membrane proteins into the cytoplasmic membrane. Binds directly to 7S RNA and mediates binding of the 54 kDa subunit of the SRP. The chain is Signal recognition particle 19 kDa protein from Methanococcus maripaludis (strain DSM 14266 / JCM 13030 / NBRC 101832 / S2 / LL).